The sequence spans 390 residues: Probable purine permease 7 (390 aa).

Helical transmembrane passes span 42–62 (WLRV…ATIL), 74–94 (TYVV…FRFF), 110–130 (SPSF…VSAY), 131–151 (AYLS…LILA), 169–189 (FTPL…LLVV), 205–225 (VIGF…LSLI), 244–264 (LAIY…FASG), 286–306 (TLAS…GLIF), 312–332 (FSNS…VIVF), and 341–361 (IFSI…HYLD).

This sequence belongs to the purine permeases (TC 2.A.7.14) family.

It is found in the membrane. The polypeptide is Probable purine permease 7 (PUP7) (Arabidopsis thaliana (Mouse-ear cress)).